The primary structure comprises 223 residues: MDLASLRAQQIELASSVIREDRLDKDPPDLIAGADVGFEQGGEVTRAAMVLLKYPSLELVEYKVARIATTMPYIPGFLSFREYPALLAAWEMLSQKPDLVFVDGHGISHPRRLGVASHFGLMVDVPTIGVAKKRLCGKFEPLSSEPGALAPLMDKGEQLAWVWRSKARCNPLFIATGHRVSVDSALAWVQRCMKGYRLPEPTRWADAVASERPAFVRYTANQP.

2 residues coordinate Mg(2+): D35 and D103.

It belongs to the endonuclease V family. Mg(2+) serves as cofactor.

The protein resides in the cytoplasm. It catalyses the reaction Endonucleolytic cleavage at apurinic or apyrimidinic sites to products with a 5'-phosphate.. Functionally, DNA repair enzyme involved in the repair of deaminated bases. Selectively cleaves double-stranded DNA at the second phosphodiester bond 3' to a deoxyinosine leaving behind the intact lesion on the nicked DNA. This Escherichia coli O139:H28 (strain E24377A / ETEC) protein is Endonuclease V.